The primary structure comprises 259 residues: Small ribosomal subunit protein uS2 (259 aa).

The tract at residues 224 to 259 is disordered; that stretch reads GKQGEDDQQVAPAEDVAEEVSDESLQDLKNSVEGND. Residues 238–248 show a composition bias toward acidic residues; it reads DVAEEVSDESL. The span at 250 to 259 shows a compositional bias: polar residues; sequence DLKNSVEGND.

This sequence belongs to the universal ribosomal protein uS2 family.

This is Small ribosomal subunit protein uS2 from Limosilactobacillus fermentum (strain NBRC 3956 / LMG 18251) (Lactobacillus fermentum).